A 213-amino-acid polypeptide reads, in one-letter code: Probable GH family 25 lysozyme 4 (213 aa).

A signal peptide spans methionine 1 to alanine 19. In terms of domain architecture, Ch-type lysozyme spans serine 21–asparagine 213. Active-site residues include aspartate 24, aspartate 112, and glutamate 114.

The protein belongs to the glycosyl hydrolase 25 family.

The protein resides in the secreted. It carries out the reaction Hydrolysis of (1-&gt;4)-beta-linkages between N-acetylmuramic acid and N-acetyl-D-glucosamine residues in a peptidoglycan and between N-acetyl-D-glucosamine residues in chitodextrins.. This is Probable GH family 25 lysozyme 4 from Dictyostelium discoideum (Social amoeba).